Consider the following 112-residue polypeptide: uncharacterized protein (112 aa).

This is an uncharacterized protein from Escherichia coli.